Reading from the N-terminus, the 264-residue chain is Endoglucanase S (264 aa).

Positions 1-32 (MQTVNTQPHRIFRVLLPAVFSSLLLSSLTVSA) are cleaved as a signal peptide.

It belongs to the glycosyl hydrolase 12 (cellulase H) family.

The catalysed reaction is Endohydrolysis of (1-&gt;4)-beta-D-glucosidic linkages in cellulose, lichenin and cereal beta-D-glucans.. The chain is Endoglucanase S (celS) from Pectobacterium parmentieri.